The following is a 642-amino-acid chain: Threonine--tRNA ligase (642 aa).

Residues 1–61 (MPVITLPDGS…ENDATLSIIT (61 aa)) enclose the TGS domain. A catalytic region spans residues 243–534 (DHRKIGKQLD…LTEEFAGFFP (292 aa)). Positions 334, 385, and 511 each coordinate Zn(2+).

It belongs to the class-II aminoacyl-tRNA synthetase family. Homodimer. Zn(2+) serves as cofactor.

The protein localises to the cytoplasm. It catalyses the reaction tRNA(Thr) + L-threonine + ATP = L-threonyl-tRNA(Thr) + AMP + diphosphate + H(+). Catalyzes the attachment of threonine to tRNA(Thr) in a two-step reaction: L-threonine is first activated by ATP to form Thr-AMP and then transferred to the acceptor end of tRNA(Thr). Also edits incorrectly charged L-seryl-tRNA(Thr). The chain is Threonine--tRNA ligase from Salmonella paratyphi A (strain ATCC 9150 / SARB42).